A 265-amino-acid polypeptide reads, in one-letter code: Apolipoprotein A-I (265 aa).

The N-terminal stretch at 1 to 18 (MKALVLTLAVLFFTGSQA) is a signal peptide. 2 tandem repeats follow at residues 67-88 (LKLLDNWDSLTSTFAKVREQLG) and 89-110 (PVTQEFWDNLEKETESLRQEMN). The segment at 67-265 (LKLLDNWDSL…DEASKKLNAQ (199 aa)) is 10 X approximate tandem repeats. Methionine sulfoxide is present on Met-109. A 3; half-length repeat occupies 111–121 (KDLEEVKQKVQ). Repeat copies occupy residues 122 to 142 (PYLDEFKRKWQEELQIYRQKV), 144 to 165 (PLGEELREGARQKVQELQDKLT), 166 to 187 (PLAEEMRDRARAHVETLRQQLA), 188 to 209 (PYSDDLRQRMATRFEVLKEGGG), and 210 to 230 (SLAEYHAKASEQLKALGEKAK). One copy of the 9; half-length repeat lies at 231–241 (PALEDLRQGLL). The stretch at 242–265 (PVLESLKVSILAAIDEASKKLNAQ) is repeat 10.

Belongs to the apolipoprotein A1/A4/E family. In terms of assembly, homodimer. Interacts with APOA1BP and CLU. Component of a sperm activating protein complex (SPAP), consisting of APOA1, an immunoglobulin heavy chain, an immunoglobulin light chain and albumin. Interacts with NDRG1. Interacts with SCGB3A2. Interacts with NAXE and YJEFN3. Glycosylated. In terms of processing, palmitoylated. Post-translationally, phosphorylation sites are present in the extracellular medium. In terms of tissue distribution, major protein of plasma HDL, also found in chylomicrons.

Its subcellular location is the secreted. Its function is as follows. Participates in the reverse transport of cholesterol from tissues to the liver for excretion by promoting cholesterol efflux from tissues and by acting as a cofactor for the lecithin cholesterol acyltransferase (LCAT). As part of the SPAP complex, activates spermatozoa motility. The sequence is that of Apolipoprotein A-I (APOA1) from Physeter macrocephalus (Sperm whale).